Here is a 1026-residue protein sequence, read N- to C-terminus: Unconventional myosin-Ic (1026 aa).

Position 1 is an N-acetylmethionine (M1). Residues 12-695 (GVQDFLLLEN…TLFITEDALE (684 aa)) form the Myosin motor domain. ATP contacts are provided by residues N53, Y61, 104-113 (SGESGAGKTE), and 157-161 (NDNSS). An N6-methyllysine modification is found at K349. Positions 572 to 594 (LAKLMDILMSKEPSYVRCIKPND) are actin-binding. 2 IQ domains span residues 698-727 (KQTI…AVIV) and 721-750 (IRHA…AADT). Residues 849 to 1024 (KDGYSRSVPK…NGHLSVTTPR (176 aa)) form the TH1 domain.

It belongs to the TRAFAC class myosin-kinesin ATPase superfamily. Myosin family. In terms of assembly, interacts (via its IQ motifs) with calm.

It is found in the cytoplasm. The protein localises to the cell cortex. The protein resides in the cell projection. It localises to the ruffle membrane. Its subcellular location is the cytoplasmic vesicle. It is found in the stereocilium membrane. Its function is as follows. Myosins are actin-based motor molecules with ATPase activity. Unconventional myosins serve in intracellular movements. Their highly divergent tails are presumed to bind to membranous compartments, which would be moved relative to actin filaments. The chain is Unconventional myosin-Ic (myo1c) from Danio rerio (Zebrafish).